Reading from the N-terminus, the 92-residue chain is Large ribosomal subunit protein bL34m (92 aa).

The N-terminal 46 residues, 1–46, are a transit peptide targeting the mitochondrion; it reads MAFLARCFGCQACRSVALLSGRYLQSRVWMGLPDSWPLLSLQQARG. S71 carries the phosphoserine modification.

It belongs to the bacterial ribosomal protein bL34 family. In terms of assembly, component of the mitochondrial ribosome large subunit (39S) which comprises a 16S rRNA and about 50 distinct proteins.

The protein localises to the mitochondrion. The polypeptide is Large ribosomal subunit protein bL34m (Mrpl34) (Mus musculus (Mouse)).